Here is a 303-residue protein sequence, read N- to C-terminus: MEKVEELKKEIERLKKERNAIILAHNYQLPEVQDVADFVGDSLELARKATKVDADVIVFAGVDFMAETAKILNPDKIVLIPNKRATCAMANMLKVKHILEAKKKYPNAPVVLYVNSTAETKAYADVTVTSANAVDIIRKLDSDVIIFGPDKNLAHYVAKVTGKTIIPIPPEGHCYVHKKFTIEDVERAKKLHPNAKLMVHPECNPEVQEHADIIVSTGGMIRRACEWDEWVVFTEREMVYRLSKLYPNKKFYPAKEDAVCVGMKAITLQHVYESLRDMKYEVTVPEEIAEKARKAIERMLEMS.

2 residues coordinate iminosuccinate: histidine 25 and serine 42. Position 87 (cysteine 87) interacts with [4Fe-4S] cluster. Iminosuccinate-binding positions include 113-115 (YVN) and serine 130. Cysteine 174 lines the [4Fe-4S] cluster pocket. Residues 200–202 (HPE) and threonine 217 each bind iminosuccinate. A [4Fe-4S] cluster-binding site is contributed by cysteine 260.

It belongs to the quinolinate synthase family. Type 2 subfamily. In terms of assembly, homodimer. [4Fe-4S] cluster is required as a cofactor.

Its subcellular location is the cytoplasm. The catalysed reaction is iminosuccinate + dihydroxyacetone phosphate = quinolinate + phosphate + 2 H2O + H(+). The protein operates within cofactor biosynthesis; NAD(+) biosynthesis; quinolinate from iminoaspartate: step 1/1. Functionally, catalyzes the condensation of iminoaspartate with dihydroxyacetone phosphate to form quinolinate. In Pyrococcus furiosus (strain ATCC 43587 / DSM 3638 / JCM 8422 / Vc1), this protein is Quinolinate synthase.